The following is a 374-amino-acid chain: Protein FAM199X (374 aa).

The disordered stretch occupies residues 238–343; the sequence is YIREHSPRQR…QLKEQRQARK (106 aa). The segment covering 261 to 295 has biased composition (low complexity); it reads SNGSTSGVSAHSSSNASMVSSTSSSTASTGSNSST. Positions 315–334 are enriched in basic residues; that stretch reads DSKKRSKQRKMQQKALRKRQ. Positions 317 to 346 form a coiled coil; it reads KKRSKQRKMQQKALRKRQLKEQRQARKERL.

The protein belongs to the FAM199 family.

In Danio rerio (Zebrafish), this protein is Protein FAM199X (fam199x).